Reading from the N-terminus, the 290-residue chain is Acetylglutamate kinase (290 aa).

Residues 65–66, R87, and N186 each bind substrate; that span reads GG.

It belongs to the acetylglutamate kinase family. ArgB subfamily.

Its subcellular location is the cytoplasm. The catalysed reaction is N-acetyl-L-glutamate + ATP = N-acetyl-L-glutamyl 5-phosphate + ADP. It functions in the pathway amino-acid biosynthesis; L-arginine biosynthesis; N(2)-acetyl-L-ornithine from L-glutamate: step 2/4. Catalyzes the ATP-dependent phosphorylation of N-acetyl-L-glutamate. In Mycolicibacterium gilvum (strain PYR-GCK) (Mycobacterium gilvum (strain PYR-GCK)), this protein is Acetylglutamate kinase.